The following is a 367-amino-acid chain: MAHNTTRVAILFGGRSAEHDVSRASAANIFRSLDASRYAVTLIGITPEGRWVLADAVNARTAQALTVPPDGPQIVLLPAGQGRALVLGDGAAAPRELTFDVIFPVLHGPNGEDGTMQGALELADVAYVGARVMGSAAAMDKDVAKRLLRDAGLPIVPFVTMTAAAPVSYEDAVHAVGCSELFIKPANLGSSVGISKARTPQEFAAACDLALRFDGKILIERCISPVREIECAVLEHADGEVKASELGEIVPASSHGFYSYAAKYTDASGASLHVPAQVEPGLAQRIRKMATEVFGVLCCESLARVDFFVHGEEVYVNEVNTLPGFTNISMYPKMWEATGLPQPALMDALIAHALARHARLRQLASQR.

One can recognise an ATP-grasp domain in the interval 145–351; that stretch reads KRLLRDAGLP…QPALMDALIA (207 aa). 174–229 provides a ligand contact to ATP; it reads HAVGCSELFIKPANLGSSVGISKARTPQEFAAACDLALRFDGKILIERCISPVREI. Residues aspartate 306, glutamate 318, and asparagine 320 each coordinate Mg(2+).

Belongs to the D-alanine--D-alanine ligase family. Requires Mg(2+) as cofactor. Mn(2+) is required as a cofactor.

The protein resides in the cytoplasm. The enzyme catalyses 2 D-alanine + ATP = D-alanyl-D-alanine + ADP + phosphate + H(+). Its pathway is cell wall biogenesis; peptidoglycan biosynthesis. Its function is as follows. Cell wall formation. The protein is D-alanine--D-alanine ligase of Bradyrhizobium sp. (strain BTAi1 / ATCC BAA-1182).